The sequence spans 176 residues: Nucleoside triphosphate/diphosphate phosphatase (176 aa).

Residue arginine 23 is the Proton donor of the active site. Residues asparagine 87, aspartate 103, aspartate 105, aspartate 107, aspartate 120, and glutamate 123 each coordinate Mg(2+).

This sequence belongs to the Ntdp family. It depends on Mg(2+) as a cofactor.

The enzyme catalyses a ribonucleoside 5'-triphosphate + H2O = a ribonucleoside 5'-diphosphate + phosphate + H(+). The catalysed reaction is a ribonucleoside 5'-diphosphate + H2O = a ribonucleoside 5'-phosphate + phosphate + H(+). Functionally, has nucleoside phosphatase activity towards nucleoside triphosphates and nucleoside diphosphates. This chain is Nucleoside triphosphate/diphosphate phosphatase, found in Bacillus cereus (strain AH820).